Reading from the N-terminus, the 522-residue chain is Circadian clock oscillator protein KaiC (522 aa).

2 KaiC domains span residues 1–248 (MKKS…INIF) and 262–522 (ARVS…DDLL). G50, T51, G52, K53, T54, S90, K225, L226, R227, T229, H231, T241, D242, T291, G292, T293, G294, K295, T296, and L297 together coordinate ATP. T54 contacts Mg(2+). T296 contributes to the Mg(2+) binding site. Position 319 (E319) interacts with Mg(2+). W332 is an ATP binding site. S432 is modified (phosphoserine; by autocatalysis). At T433 the chain carries Phosphothreonine; by autocatalysis. ATP contacts are provided by R452, K458, M459, R460, S462, H464, and K466.

This sequence belongs to the KaiC family. In terms of assembly, homohexamer; hexamerization is dependent on ATP-binding. The KaiABC complex composition changes during the circadian cycle to control KaiC phosphorylation. Complexes KaiC(6), KaiA(2-4):KaiC(6), KaiB(6):KaiC(6) and KaiC(6):KaiB(6):KaiA(12) are among the most important forms, many form cooperatively. KaiC interacts with SasA, activating its autokinase function and leading to RpaA activation. Mg(2+) is required as a cofactor. In terms of processing, phosphorylated on serine and threonine residues by autocatalysis. Has a 4 step phosphorylation cycle; the autokinase acts first on Thr-433, then Ser-432. When Ser-432 is modified KaiC switches to an autophosphatase mode, acting first on phospho-Thr-433 then phospho-Ser-432.

The enzyme catalyses L-seryl-[protein] + ATP = O-phospho-L-seryl-[protein] + ADP + H(+). It catalyses the reaction L-threonyl-[protein] + ATP = O-phospho-L-threonyl-[protein] + ADP + H(+). The catalysed reaction is ATP + H2O = ADP + phosphate + H(+). With respect to regulation, the interaction with KaiA enhances its phosphorylation status, while the interaction with KaiB decreases it. Central component of the KaiABC oscillator complex, which constitutes the main circadian regulator in cyanobacteria. Complex composition changes during the circadian cycle to control KaiC phosphorylation. KaiA stimulates KaiC autophosphorylation, while KaiB sequesters KaiA, leading to KaiC autodephosphorylation. Clock output pathways impact the RpaA transcriptional regulator. KaiC enhances the autophosphorylation activity of SasA, which then transfers its phosphate group to RpaA to activate it. KaiB and KaiC together enhance the phospho-RpaA dephosphatase activity of CikA. Functionally, has a weak, temperature-independent ATPase activity; ATPase activity defines the circadian period. The phosphorylation state of KaiC modulates its ATPase activity and effects KaiB binding. The chain is Circadian clock oscillator protein KaiC from Acaryochloris marina (strain MBIC 11017).